A 226-amino-acid polypeptide reads, in one-letter code: DELTA-alicitoxin-Pse1b (226 aa).

An N-terminal signal peptide occupies residues 1 to 21 (MRHFVVFLYMFLALSIPTAFA). Positions 22–45 (KKHIVTKKGNHQDITNDNEGENAE) are excised as a propeptide. The plays an important role in the hemolytic activity stretch occupies residues 50-59 (TVAGAVIAGG). The segment at 58–77 (GGELALKILTKILYEIGKID) is N-terminal region. Residues S101, V134, S152, P154, Y180, and Y184 each contribute to the phosphocholine site. Residues 152–167 (SVPFDYNLYSNWWNVK) form a trp-rich region, which is important for the binding to lipid membrane region.

This sequence belongs to the actinoporin family. Sea anemone subfamily. In terms of assembly, octamer or nonamer in membranes. Monomer in the soluble state.

It localises to the secreted. It is found in the nematocyst. The protein localises to the target cell membrane. Pore-forming protein that forms cations-selective hydrophilic pores of around 1 nm and causes cytolysis. Pore formation is a multi-step process that involves specific recognition of membrane sphingomyelin (but neither cholesterol nor phosphatidylcholine) using aromatic rich region and adjacent phosphocholine (POC) binding site, firm binding to the membrane (mainly driven by hydrophobic interactions) accompanied by the transfer of the N-terminal region to the lipid-water interface and finally pore formation after oligomerization of monomers. In Phyllodiscus semoni (Night anemone), this protein is DELTA-alicitoxin-Pse1b.